The following is a 107-amino-acid chain: Large ribosomal subunit protein bL21c (107 aa).

Belongs to the bacterial ribosomal protein bL21 family. Part of the 50S ribosomal subunit.

It localises to the plastid. The protein localises to the chloroplast. Functionally, this protein binds to 23S rRNA. In Cyanidioschyzon merolae (strain NIES-3377 / 10D) (Unicellular red alga), this protein is Large ribosomal subunit protein bL21c.